The following is a 667-amino-acid chain: Phosphomethylpyrimidine synthase (667 aa).

Residues N235, M264, Y293, H329, 349–351 (SRG), 390–393 (DGMR), and E429 each bind substrate. Position 433 (H433) interacts with Zn(2+). Y456 is a binding site for substrate. Zn(2+) is bound at residue H497. [4Fe-4S] cluster contacts are provided by C577, C580, and C585. The disordered stretch occupies residues 618 to 642 (DSYTGSESDTAKRASQREQGMAQMS).

Belongs to the ThiC family. As to quaternary structure, homodimer. [4Fe-4S] cluster is required as a cofactor.

It carries out the reaction 5-amino-1-(5-phospho-beta-D-ribosyl)imidazole + S-adenosyl-L-methionine = 4-amino-2-methyl-5-(phosphooxymethyl)pyrimidine + CO + 5'-deoxyadenosine + formate + L-methionine + 3 H(+). It participates in cofactor biosynthesis; thiamine diphosphate biosynthesis. Functionally, catalyzes the synthesis of the hydroxymethylpyrimidine phosphate (HMP-P) moiety of thiamine from aminoimidazole ribotide (AIR) in a radical S-adenosyl-L-methionine (SAM)-dependent reaction. This chain is Phosphomethylpyrimidine synthase, found in Shewanella pealeana (strain ATCC 700345 / ANG-SQ1).